Here is a 92-residue protein sequence, read N- to C-terminus: UPF0223 protein EF_2462 (92 aa).

The protein belongs to the UPF0223 family.

The polypeptide is UPF0223 protein EF_2462 (Enterococcus faecalis (strain ATCC 700802 / V583)).